Reading from the N-terminus, the 401-residue chain is Tryptophan synthase beta chain (401 aa).

K88 is modified (N6-(pyridoxal phosphate)lysine).

This sequence belongs to the TrpB family. Tetramer of two alpha and two beta chains. Pyridoxal 5'-phosphate serves as cofactor.

The catalysed reaction is (1S,2R)-1-C-(indol-3-yl)glycerol 3-phosphate + L-serine = D-glyceraldehyde 3-phosphate + L-tryptophan + H2O. Its pathway is amino-acid biosynthesis; L-tryptophan biosynthesis; L-tryptophan from chorismate: step 5/5. Functionally, the beta subunit is responsible for the synthesis of L-tryptophan from indole and L-serine. This Shewanella denitrificans (strain OS217 / ATCC BAA-1090 / DSM 15013) protein is Tryptophan synthase beta chain.